We begin with the raw amino-acid sequence, 390 residues long: uncharacterized protein (390 aa).

This is an uncharacterized protein from Acanthamoeba polyphaga (Amoeba).